We begin with the raw amino-acid sequence, 290 residues long: GTPase Era (290 aa).

The Era-type G domain maps to 2–169 (KSGFVSIIGR…KDKIYANLQE (168 aa)). The segment at 10 to 17 (GRPSTGKS) is G1. 10–17 (GRPSTGKS) is a binding site for GTP. Residues 36-40 (QTTRN) form a G2 region. Residues 57–60 (DTPG) form a G3 region. GTP is bound by residues 57-61 (DTPGF) and 119-122 (NKID). The tract at residues 119–122 (NKID) is G4. A G5 region spans residues 148-150 (ISA). In terms of domain architecture, KH type-2 spans 200–276 (LKEELPYSLY…DLFLQVKLRK (77 aa)).

This sequence belongs to the TRAFAC class TrmE-Era-EngA-EngB-Septin-like GTPase superfamily. Era GTPase family. As to quaternary structure, monomer.

The protein resides in the cytoplasm. It localises to the cell inner membrane. An essential GTPase that binds both GDP and GTP, with rapid nucleotide exchange. Plays a role in 16S rRNA processing and 30S ribosomal subunit biogenesis and possibly also in cell cycle regulation and energy metabolism. In Borrelia hermsii (strain HS1 / DAH), this protein is GTPase Era.